The chain runs to 141 residues: Large ribosomal subunit protein uL16c (141 aa).

Basic residues predominate over residues 1 to 17; that stretch reads MLSPRRTKYRKQHRGRL. Residues 1-20 are disordered; it reads MLSPRRTKYRKQHRGRLKGT.

The protein belongs to the universal ribosomal protein uL16 family. In terms of assembly, part of the 50S ribosomal subunit.

Its subcellular location is the plastid. The protein resides in the chloroplast. The sequence is that of Large ribosomal subunit protein uL16c from Staurastrum punctulatum (Green alga).